A 223-amino-acid polypeptide reads, in one-letter code: Neurotrophic factor BDNF precursor form (223 aa).

A signal peptide spans 1–5 (SCMKA). Residues 6–114 (APMKEVSIRG…AANMSMRVRR (109 aa)) constitute a propeptide that is removed on maturation. N-linked (GlcNAc...) asparagine glycosylation is present at asparagine 107. Cystine bridges form between cysteine 127-cysteine 194 and cysteine 172-cysteine 223.

Belongs to the NGF-beta family.

It is found in the secreted. Promotes the survival of neuronal populations that are all located either in the central nervous system or directly connected to it. The chain is Neurotrophic factor BDNF precursor form (BDNF) from Chilabothrus striatus (Haitian boa constrictor).